The sequence spans 249 residues: Seipin homolog (249 aa).

The Cytoplasmic segment spans residues 1–10 (MGYLVKLFKL). The helical transmembrane segment at 11–31 (VVWMLVIGLFSIPSLVSYVIF) threads the bilayer. The Lumenal segment spans residues 32-212 (YDTVIPHSVI…GMRWFMYTHK (181 aa)). The helical transmembrane segment at 213–233 (VSAFLVFTSLFWFTGITSTII) threads the bilayer. Residues 234–249 (TYLIVSSTSETKATRR) are Cytoplasmic-facing.

It belongs to the seipin family.

The protein resides in the endoplasmic reticulum membrane. Involved in lipid metabolism and lipid droplet (LD) morphology, number, and size. Facilitates initiation of LD formation, and ensures that vectorial budding of LDs from the ER is directed towards the cytoplasm. The chain is Seipin homolog from Schizosaccharomyces pombe (strain 972 / ATCC 24843) (Fission yeast).